The following is a 115-amino-acid chain: Hydrogenase maturation factor HypA (115 aa).

His2 serves as a coordination point for Ni(2+). Zn(2+) contacts are provided by Cys73, Cys76, Cys89, and Cys92.

The protein belongs to the HypA/HybF family.

Involved in the maturation of [NiFe] hydrogenases. Required for nickel insertion into the metal center of the hydrogenase. This Parabacteroides distasonis (strain ATCC 8503 / DSM 20701 / CIP 104284 / JCM 5825 / NCTC 11152) protein is Hydrogenase maturation factor HypA.